A 457-amino-acid chain; its full sequence is Adenylosuccinate synthetase isozyme 1 (457 aa).

The interval 1 to 24 (MSGTRASNDRPPGTGGVKRGRLQQ) is disordered. GTP contacts are provided by residues 42-48 (GDEGKGK) and 70-72 (GHT). The Proton acceptor role is filled by D43. Mg(2+)-binding residues include D43 and G70. D43 serves as a coordination point for substrate. Residues 43-46 (DEGK), 68-71 (NAGH), T163, R177, N256, T271, and R335 each bind IMP. H71 serves as the catalytic Proton donor. 331–337 (VTTGRKR) provides a ligand contact to substrate. Residues R337, 363–365 (KLD), and 445–448 (GVGK) each bind GTP.

It belongs to the adenylosuccinate synthetase family. Homodimer. Requires Mg(2+) as cofactor. In terms of tissue distribution, high levels in muscle.

It is found in the cytoplasm. It localises to the membrane. The catalysed reaction is IMP + L-aspartate + GTP = N(6)-(1,2-dicarboxyethyl)-AMP + GDP + phosphate + 2 H(+). It functions in the pathway purine metabolism; AMP biosynthesis via de novo pathway; AMP from IMP: step 1/2. Its activity is regulated as follows. Weakly inhibited by AMP non-competitively to all substrates. Inhibited by IMP non-competitively with respect to GTP. Inhibited by fructose 1,6-bisphosphate competitively with respect to IMP. Functionally, component of the purine nucleotide cycle (PNC), which interconverts IMP and AMP to regulate the nucleotide levels in various tissues, and which contributes to glycolysis and ammoniagenesis. Catalyzes the first committed step in the biosynthesis of AMP from IMP. This Mus musculus (Mouse) protein is Adenylosuccinate synthetase isozyme 1 (Adss1).